A 228-amino-acid polypeptide reads, in one-letter code: Deoxyribose-phosphate aldolase (228 aa).

Residue Asp-93 is the Proton donor/acceptor of the active site. Catalysis depends on Lys-159, which acts as the Schiff-base intermediate with acetaldehyde. Residue Lys-188 is the Proton donor/acceptor of the active site.

The protein belongs to the DeoC/FbaB aldolase family. DeoC type 1 subfamily.

The protein resides in the cytoplasm. It catalyses the reaction 2-deoxy-D-ribose 5-phosphate = D-glyceraldehyde 3-phosphate + acetaldehyde. Its pathway is carbohydrate degradation; 2-deoxy-D-ribose 1-phosphate degradation; D-glyceraldehyde 3-phosphate and acetaldehyde from 2-deoxy-alpha-D-ribose 1-phosphate: step 2/2. In terms of biological role, catalyzes a reversible aldol reaction between acetaldehyde and D-glyceraldehyde 3-phosphate to generate 2-deoxy-D-ribose 5-phosphate. The sequence is that of Deoxyribose-phosphate aldolase from Carboxydothermus hydrogenoformans (strain ATCC BAA-161 / DSM 6008 / Z-2901).